The sequence spans 421 residues: SH2 domain-containing protein 4A (421 aa).

Residues Ser117 and Ser123 each carry the phosphoserine modification. Positions 132 to 271 (DLQAMKKTEP…FLQPLGIPPK (140 aa)) are disordered. Basic and acidic residues-rich tracts occupy residues 163–201 (TRKD…KEDS) and 211–230 (KAAD…DYKR). The residue at position 232 (Ser232) is a Phosphoserine. One can recognise an SH2 domain in the interval 315–407 (WFHGILTLKK…LGKELLLYPC (93 aa)).

Interacts with ESR1. In the kidney, expressed only in the glomerulus. Expressed in T-cells, B-cells, macrophages and dendritic cells (at protein level). In adult, highest levels are found in muscle and lung with lower levels in kidney.

The protein resides in the cytoplasm. Its function is as follows. Inhibits estrogen-induced cell proliferation by competing with PLCG for binding to ESR1, blocking the effect of estrogen on PLCG and repressing estrogen-induced proliferation. May play a role in T-cell development and function. The protein is SH2 domain-containing protein 4A (Sh2d4a) of Mus musculus (Mouse).